The sequence spans 447 residues: MCLPTIRKIAIIGAGPSGLVTAKALLAEKAFDQVTLFERRGSPGGVWNYTSTLSNKLPVPSTNPILTTEPIVGPAALPVYPSPLYRDLQTNTPIELMGYCDQSFKPQTLQFPHRHTIQEYQRIYAQPLLPFIKLATDVLDIEKKDGSWVVTYKGTKAGSPISKDIFDAVSICNGHYEVPYIPNIKGLDEYAKAVPGSVLHSSLFREPELFVGESVLVVGGASSANDLVRHLTPVAKHPIYQSLLGGGDIQNESLQQVPEITKFDPTTREIYLKGGKVLSNIDRVIYCTGYLYSVPFPSLAKLKSPETKLIDDGSHVHNVYQHIFYIPDPTLAFVGLALHVVPFPTSQAQAAFLARVWSGRLKLPSKEEQLKWQDELMFSLSGANNMYHSLDYPKDATYINKLHDWCKQATPVLEEEFPSPYWGEKERSIRENMWSIRAKFFGIEPPK.

Residues 13–17, Glu38, 46–47, 91–92, and 137–138 contribute to the FAD site; these read GAGPS, VW, NT, and DV. Residue 90–91 coordinates NADP(+); it reads TN. Residue 223 to 226 coordinates NADP(+); that stretch reads SAND.

It belongs to the FMO family. As to quaternary structure, monomer. It depends on FAD as a cofactor.

Flavin-dependent oxidation of thiol-containing compounds. Probably required for the correct folding of disulfide-bonded proteins. This is Thiol-specific monooxygenase (fmo1) from Schizosaccharomyces pombe (strain 972 / ATCC 24843) (Fission yeast).